Reading from the N-terminus, the 349-residue chain is tRNA pseudouridine synthase D (349 aa).

Phe-27 serves as a coordination point for substrate. Residue Asp-80 is the Nucleophile of the active site. Substrate is bound at residue Asn-129. In terms of domain architecture, TRUD spans 155–303; it reads GVPNYFGAQR…VEAARRAMLL (149 aa). Phe-329 is a binding site for substrate.

Belongs to the pseudouridine synthase TruD family.

It carries out the reaction uridine(13) in tRNA = pseudouridine(13) in tRNA. In terms of biological role, responsible for synthesis of pseudouridine from uracil-13 in transfer RNAs. This chain is tRNA pseudouridine synthase D, found in Escherichia coli O45:K1 (strain S88 / ExPEC).